A 390-amino-acid chain; its full sequence is Copper-containing nitrite reductase (390 aa).

Positions 1-18 (MKRQALAAMIASLFALAA) are cleaved as a signal peptide. Residue C19 is the site of N-palmitoyl cysteine attachment. A lipid anchor (S-diacylglycerol cysteine) is attached at C19. The tract at residues 30 to 51 (ETPAAAAEAASSAAQTAAETPS) is disordered. Plastocyanin-like domains lie at 101–195 (WTFD…ILVE) and 245–346 (GHVG…LKVE). Positions 134, 139, 174, 175, 183, and 188 each coordinate Cu cation. H139 contacts substrate. H280 is a binding site for substrate. H329 serves as a coordination point for Cu cation. A disordered region spans residues 367 to 390 (GAAPAASAPAASAPAASASEKSVY). Residues 368 to 390 (AAPAASAPAASAPAASASEKSVY) show a composition bias toward low complexity. 3 repeat units span residues 371–375 (AASAP), 376–380 (AASAP), and 381–385 (AASAS). The 3 X 5 AA tandem repeats of A-A-S-A-P stretch occupies residues 371–385 (AASAPAASAPAASAS).

This sequence belongs to the multicopper oxidase family. As to quaternary structure, homotrimer. It depends on Cu(+) as a cofactor. Cu(2+) serves as cofactor.

It is found in the cell outer membrane. The enzyme catalyses nitric oxide + Fe(III)-[cytochrome c] + H2O = Fe(II)-[cytochrome c] + nitrite + 2 H(+). In terms of biological role, catalyzes the reduction of nitrite to nitric oxide (NO). It could be essential for growth and survival in oxygen-depleted environments. The chain is Copper-containing nitrite reductase (aniA) from Neisseria meningitidis serogroup B (strain ATCC BAA-335 / MC58).